Consider the following 36-residue polypeptide: Photosystem I reaction center subunit VIII (36 aa).

The helical transmembrane segment at 4–24 (FSLPSILVPLVGLVLPAIAMA) threads the bilayer.

This sequence belongs to the PsaI family.

The protein resides in the plastid. Its subcellular location is the chloroplast thylakoid membrane. May help in the organization of the PsaL subunit. In Piper cenocladum (Ant piper), this protein is Photosystem I reaction center subunit VIII.